A 282-amino-acid polypeptide reads, in one-letter code: Bifunctional protein FolD (282 aa).

Residues 162-164 (GRS), serine 187, and valine 228 contribute to the NADP(+) site.

It belongs to the tetrahydrofolate dehydrogenase/cyclohydrolase family. As to quaternary structure, homodimer.

The enzyme catalyses (6R)-5,10-methylene-5,6,7,8-tetrahydrofolate + NADP(+) = (6R)-5,10-methenyltetrahydrofolate + NADPH. The catalysed reaction is (6R)-5,10-methenyltetrahydrofolate + H2O = (6R)-10-formyltetrahydrofolate + H(+). It functions in the pathway one-carbon metabolism; tetrahydrofolate interconversion. Functionally, catalyzes the oxidation of 5,10-methylenetetrahydrofolate to 5,10-methenyltetrahydrofolate and then the hydrolysis of 5,10-methenyltetrahydrofolate to 10-formyltetrahydrofolate. The chain is Bifunctional protein FolD from Thermus thermophilus (strain ATCC 27634 / DSM 579 / HB8).